Consider the following 167-residue polypeptide: Mediator of RNA polymerase II transcription subunit 10 (167 aa).

Residues 141 to 158 (TGGRTVGGEGEGAGQGEG) show a composition bias toward gly residues. The segment at 141–167 (TGGRTVGGEGEGAGQGEGGEGRGEGGN) is disordered.

This sequence belongs to the Mediator complex subunit 10 family. Component of the Mediator complex.

The protein localises to the nucleus. Functionally, component of the Mediator complex, a coactivator involved in the regulated transcription of nearly all RNA polymerase II-dependent genes. Mediator functions as a bridge to convey information from gene-specific regulatory proteins to the basal RNA polymerase II transcription machinery. Mediator is recruited to promoters by direct interactions with regulatory proteins and serves as a scaffold for the assembly of a functional preinitiation complex with RNA polymerase II and the general transcription factors. The sequence is that of Mediator of RNA polymerase II transcription subunit 10 (NUT2) from Chaetomium globosum (strain ATCC 6205 / CBS 148.51 / DSM 1962 / NBRC 6347 / NRRL 1970) (Soil fungus).